The sequence spans 56 residues: Large ribosomal subunit protein bL33 (56 aa).

This sequence belongs to the bacterial ribosomal protein bL33 family.

In Halorhodospira halophila (strain DSM 244 / SL1) (Ectothiorhodospira halophila (strain DSM 244 / SL1)), this protein is Large ribosomal subunit protein bL33.